Here is a 446-residue protein sequence, read N- to C-terminus: MNALPSTIVAIATAAGTGGIGIVRLSGPQSVQIAAALGIAGLQSRHARYARFRDAQGEVIDDGIAVWFPAPHSFTGEEVVELQGHGSPVLLRQLVARCIALGARQARAGEFSERAFLNGKLDLAQAEAIADLIAAGDLRAARAARRSLDGVFSRRVDAVSESLTRLRIHVEAAIDFADEPLDTLGGAQVREELTRTRALLAQLLRDAERGRKLRDGLHAVLIGPPNAGKSSLLNALAGSDRAIVTDVAGTTRDTLHEAIQLDGFELTLVDTAGLREGGDAIEREGMRRARAELQRADLALIVLDARDPQAARDALGDAIDAVPRRLWIHNKCDLLAVAGPMDADAIAVSAVTGQGLEHLHTRLRELALGDGIESVDGEFSARTRHVDALHRAEQHADAADLELRYEQLELAAEELRLAHEALGEITGKLSADDLLGKIFSSFCIGK.

Residues Arg-24, Glu-81, and Lys-120 each coordinate (6S)-5-formyl-5,6,7,8-tetrahydrofolate. In terms of domain architecture, TrmE-type G spans 216-368 (GLHAVLIGPP…LHTRLRELAL (153 aa)). Asn-226 contacts K(+). GTP contacts are provided by residues 226–231 (NAGKSS), 245–251 (TDVAGTT), and 270–273 (DTAG). Position 230 (Ser-230) interacts with Mg(2+). Positions 245, 247, and 250 each coordinate K(+). Thr-251 is a binding site for Mg(2+). Lys-446 is a (6S)-5-formyl-5,6,7,8-tetrahydrofolate binding site.

It belongs to the TRAFAC class TrmE-Era-EngA-EngB-Septin-like GTPase superfamily. TrmE GTPase family. In terms of assembly, homodimer. Heterotetramer of two MnmE and two MnmG subunits. K(+) is required as a cofactor.

The protein resides in the cytoplasm. Its function is as follows. Exhibits a very high intrinsic GTPase hydrolysis rate. Involved in the addition of a carboxymethylaminomethyl (cmnm) group at the wobble position (U34) of certain tRNAs, forming tRNA-cmnm(5)s(2)U34. The protein is tRNA modification GTPase MnmE of Xanthomonas campestris pv. campestris (strain 8004).